A 556-amino-acid chain; its full sequence is Formate--tetrahydrofolate ligase (556 aa).

65–72 (TPAGEGKT) is an ATP binding site.

Belongs to the formate--tetrahydrofolate ligase family.

It carries out the reaction (6S)-5,6,7,8-tetrahydrofolate + formate + ATP = (6R)-10-formyltetrahydrofolate + ADP + phosphate. Its pathway is one-carbon metabolism; tetrahydrofolate interconversion. The protein is Formate--tetrahydrofolate ligase of Proteus mirabilis (strain HI4320).